The primary structure comprises 197 residues: Imidazoleglycerol-phosphate dehydratase (197 aa).

It belongs to the imidazoleglycerol-phosphate dehydratase family.

It is found in the cytoplasm. The catalysed reaction is D-erythro-1-(imidazol-4-yl)glycerol 3-phosphate = 3-(imidazol-4-yl)-2-oxopropyl phosphate + H2O. It functions in the pathway amino-acid biosynthesis; L-histidine biosynthesis; L-histidine from 5-phospho-alpha-D-ribose 1-diphosphate: step 6/9. The protein is Imidazoleglycerol-phosphate dehydratase of Syntrophomonas wolfei subsp. wolfei (strain DSM 2245B / Goettingen).